Consider the following 238-residue polypeptide: Probable rhamnogalacturonate lyase B (238 aa).

Positions 1-19 (MRLRTSLGVASACASVASA) are cleaved as a signal peptide. N27, N110, and N143 each carry an N-linked (GlcNAc...) asparagine glycan.

The protein belongs to the polysaccharide lyase 4 family.

It is found in the secreted. It catalyses the reaction Endotype eliminative cleavage of L-alpha-rhamnopyranosyl-(1-&gt;4)-alpha-D-galactopyranosyluronic acid bonds of rhamnogalacturonan I domains in ramified hairy regions of pectin leaving L-rhamnopyranose at the reducing end and 4-deoxy-4,5-unsaturated D-galactopyranosyluronic acid at the non-reducing end.. In terms of biological role, pectinolytic enzymes consist of four classes of enzymes: pectin lyase, polygalacturonase, pectin methylesterase and rhamnogalacturonase. Degrades the rhamnogalacturonan I (RG-I) backbone of pectin. In Aspergillus oryzae (strain ATCC 42149 / RIB 40) (Yellow koji mold), this protein is Probable rhamnogalacturonate lyase B (rglB).